We begin with the raw amino-acid sequence, 503 residues long: Aspartyl/glutamyl-tRNA(Asn/Gln) amidotransferase subunit B (503 aa).

It belongs to the GatB/GatE family. GatB subfamily. Heterotrimer of A, B and C subunits.

It carries out the reaction L-glutamyl-tRNA(Gln) + L-glutamine + ATP + H2O = L-glutaminyl-tRNA(Gln) + L-glutamate + ADP + phosphate + H(+). The enzyme catalyses L-aspartyl-tRNA(Asn) + L-glutamine + ATP + H2O = L-asparaginyl-tRNA(Asn) + L-glutamate + ADP + phosphate + 2 H(+). Functionally, allows the formation of correctly charged Asn-tRNA(Asn) or Gln-tRNA(Gln) through the transamidation of misacylated Asp-tRNA(Asn) or Glu-tRNA(Gln) in organisms which lack either or both of asparaginyl-tRNA or glutaminyl-tRNA synthetases. The reaction takes place in the presence of glutamine and ATP through an activated phospho-Asp-tRNA(Asn) or phospho-Glu-tRNA(Gln). The chain is Aspartyl/glutamyl-tRNA(Asn/Gln) amidotransferase subunit B from Rhodococcus erythropolis (strain PR4 / NBRC 100887).